The primary structure comprises 261 residues: 3-methyl-2-oxobutanoate hydroxymethyltransferase (261 aa).

Residues D44 and D83 each coordinate Mg(2+). 3-methyl-2-oxobutanoate contacts are provided by residues 44 to 45, D83, and K113; that span reads DS. Residue E115 participates in Mg(2+) binding. E183 functions as the Proton acceptor in the catalytic mechanism.

Belongs to the PanB family. As to quaternary structure, homodecamer; pentamer of dimers. Mg(2+) serves as cofactor.

It localises to the cytoplasm. The catalysed reaction is 3-methyl-2-oxobutanoate + (6R)-5,10-methylene-5,6,7,8-tetrahydrofolate + H2O = 2-dehydropantoate + (6S)-5,6,7,8-tetrahydrofolate. The protein operates within cofactor biosynthesis; (R)-pantothenate biosynthesis; (R)-pantoate from 3-methyl-2-oxobutanoate: step 1/2. Functionally, catalyzes the reversible reaction in which hydroxymethyl group from 5,10-methylenetetrahydrofolate is transferred onto alpha-ketoisovalerate to form ketopantoate. This chain is 3-methyl-2-oxobutanoate hydroxymethyltransferase, found in Cyanothece sp. (strain PCC 7425 / ATCC 29141).